The sequence spans 147 residues: Hemoglobin subunit epsilon (147 aa).

The region spanning 3 to 147 (HFTPEEKCII…VAIALAHKYH (145 aa)) is the Globin domain. Serine 51 carries the phosphoserine modification. The heme b site is built by histidine 64 and histidine 93.

This sequence belongs to the globin family. In terms of tissue distribution, red blood cells.

In terms of biological role, hemoglobin epsilon chain is a beta-type chain found in early embryos. This Oryctolagus cuniculus (Rabbit) protein is Hemoglobin subunit epsilon (HBE1).